The chain runs to 101 residues: Small ribosomal subunit protein bS18c (101 aa).

Residues 1–19 (MDKSKQLFRKSKGSFRRRL) show a composition bias toward basic residues. Positions 1-23 (MDKSKQLFRKSKGSFRRRLPPIG) are disordered.

Belongs to the bacterial ribosomal protein bS18 family. Part of the 30S ribosomal subunit.

The protein localises to the plastid. The protein resides in the chloroplast. The sequence is that of Small ribosomal subunit protein bS18c from Acorus gramineus (Dwarf sweet flag).